The sequence spans 376 residues: UDP-N-acetylglucosamine--N-acetylmuramyl-(pentapeptide) pyrophosphoryl-undecaprenol N-acetylglucosamine transferase (376 aa).

Residues Thr11 to Gly13, Asn117, Arg160, Ser208, and Gln310 each bind UDP-N-acetyl-alpha-D-glucosamine.

It belongs to the glycosyltransferase 28 family. MurG subfamily.

The protein resides in the cell inner membrane. The enzyme catalyses di-trans,octa-cis-undecaprenyl diphospho-N-acetyl-alpha-D-muramoyl-L-alanyl-D-glutamyl-meso-2,6-diaminopimeloyl-D-alanyl-D-alanine + UDP-N-acetyl-alpha-D-glucosamine = di-trans,octa-cis-undecaprenyl diphospho-[N-acetyl-alpha-D-glucosaminyl-(1-&gt;4)]-N-acetyl-alpha-D-muramoyl-L-alanyl-D-glutamyl-meso-2,6-diaminopimeloyl-D-alanyl-D-alanine + UDP + H(+). It participates in cell wall biogenesis; peptidoglycan biosynthesis. Functionally, cell wall formation. Catalyzes the transfer of a GlcNAc subunit on undecaprenyl-pyrophosphoryl-MurNAc-pentapeptide (lipid intermediate I) to form undecaprenyl-pyrophosphoryl-MurNAc-(pentapeptide)GlcNAc (lipid intermediate II). The chain is UDP-N-acetylglucosamine--N-acetylmuramyl-(pentapeptide) pyrophosphoryl-undecaprenol N-acetylglucosamine transferase from Rickettsia africae (strain ESF-5).